We begin with the raw amino-acid sequence, 1121 residues long: Myelin transcription factor 1 (1121 aa).

Disordered stretches follow at residues 1–156 (MSLE…SKGS) and 200–376 (EAAE…MTRG). Residues 21–64 (PETTAADLSCPTPGCTGSGHVRGKYSRHRSLQSCPLAKKRKLEG) form a CCHHC-type 1 zinc finger. Residues Cys30, Cys35, His48, and Cys54 each contribute to the Zn(2+) site. A compositionally biased stretch (basic residues) spans 41–50 (VRGKYSRHRS). 2 stretches are compositionally biased toward basic and acidic residues: residues 62-71 (LEGAEAEHLV) and 123-132 (DEIHRPETAE). Residues 147-156 (GSATASSKGS) are compositionally biased toward low complexity. The segment covering 258–308 (EEEDEEEEEEEEEEEEDEEEEEEEEEEEEEEEEEEEEEEEEEEEEEEEEAA) has biased composition (acidic residues). Over residues 346-358 (VRSDDDKDEDTHS) the composition is skewed to basic and acidic residues. 2 CCHHC-type zinc fingers span residues 433–476 (SRAE…PPEI) and 477–520 (LAMH…KLAK). Zn(2+) contacts are provided by Cys442, Cys447, His460, Cys466, Cys486, Cys491, His504, and Cys510. Disordered stretches follow at residues 517–540 (KLAK…SNSD) and 668–774 (TLDL…EERK). The span at 526-540 (QPQTGDPSKSSSNSD) shows a compositional bias: polar residues. The segment covering 705–723 (SSTSAPSSSMTSPQSSQAS) has biased composition (low complexity). Positions 724–733 (RQDEWDRPLD) are enriched in basic and acidic residues. Acidic residues predominate over residues 759 to 770 (EADDQEVSEENF). 4 CCHHC-type zinc fingers span residues 791–834 (KDIK…LRNL), 835–878 (MAAH…GVKV), 884–927 (DKED…QKEG), and 937–980 (KSLK…GKKG). The Zn(2+) site is built by Cys800, Cys805, His818, Cys824, Cys844, Cys849, His862, Cys868, Cys893, Cys898, His911, Cys917, Cys946, Cys951, His964, and Cys970.

This sequence belongs to the MYT1 family. In terms of assembly, interacts with STEAP3. In terms of tissue distribution, mostly in developing nervous system. Expressed in neural progenitors and oligodendrocyte lineage cells. More highly expressed in oligodendrocyte progenitors than in differentiated oligodendrocytes.

It is found in the nucleus. Functionally, binds to the promoter region of genes encoding proteolipid proteins of the central nervous system. May play a role in the development of neurons and oligodendroglia in the CNS. May regulate a critical transition point in oligodendrocyte lineage development by modulating oligodendrocyte progenitor proliferation relative to terminal differentiation and up-regulation of myelin gene transcription. This is Myelin transcription factor 1 (MYT1) from Homo sapiens (Human).